The sequence spans 331 residues: MILSIESSCDDSSIAITRLEDRAILFHKKISQDSAHSPHGGVVPELASRLHAVALPKILEECAPFFPRLKAIAVTNEPGLSVTLLEGVMMAKALALALHLPLIAVNHLKGHLYSLFLEQESRFPLDVLLVSGGHTMVLHARSFGEIEIIGQSMDDSFGESFDKVAKMLSLGYPGGPIVESYAKEGDASRFPLPLPLAGKKEVAFSFSGLKNAVRLVIQSLQNPPNEQEKRDICASFQATAIAHLIQKCRLYLATSNAPYLAIVGGASANLALREEMERLGEHFGKKLLLAPLAYCSDNAAMIGRAALESYALGAFTSPLELTVRPRTPSLC.

The Fe cation site is built by H107 and H111. Substrate contacts are provided by residues 129–133 (LVSGG), D162, G175, and N269. D297 lines the Fe cation pocket.

It belongs to the KAE1 / TsaD family. It depends on Fe(2+) as a cofactor.

It is found in the cytoplasm. It catalyses the reaction L-threonylcarbamoyladenylate + adenosine(37) in tRNA = N(6)-L-threonylcarbamoyladenosine(37) in tRNA + AMP + H(+). Its function is as follows. Required for the formation of a threonylcarbamoyl group on adenosine at position 37 (t(6)A37) in tRNAs that read codons beginning with adenine. Is involved in the transfer of the threonylcarbamoyl moiety of threonylcarbamoyl-AMP (TC-AMP) to the N6 group of A37, together with TsaE and TsaB. TsaD likely plays a direct catalytic role in this reaction. The protein is tRNA N6-adenosine threonylcarbamoyltransferase of Wolinella succinogenes (strain ATCC 29543 / DSM 1740 / CCUG 13145 / JCM 31913 / LMG 7466 / NCTC 11488 / FDC 602W) (Vibrio succinogenes).